The sequence spans 511 residues: Histidine ammonia-lyase 2 (511 aa).

The 5-imidazolinone (Ser-Gly) cross-link spans 144–146; it reads SSG. The residue at position 145 (Ser-145) is a 2,3-didehydroalanine (Ser).

It belongs to the PAL/histidase family. Contains an active site 4-methylidene-imidazol-5-one (MIO), which is formed autocatalytically by cyclization and dehydration of residues Ser-Ser-Gly.

It localises to the cytoplasm. It carries out the reaction L-histidine = trans-urocanate + NH4(+). It functions in the pathway amino-acid degradation; L-histidine degradation into L-glutamate; N-formimidoyl-L-glutamate from L-histidine: step 1/3. The chain is Histidine ammonia-lyase 2 (hutH2) from Fusobacterium nucleatum subsp. nucleatum (strain ATCC 25586 / DSM 15643 / BCRC 10681 / CIP 101130 / JCM 8532 / KCTC 2640 / LMG 13131 / VPI 4355).